The chain runs to 228 residues: uncharacterized protein (228 aa).

5 consecutive transmembrane segments (helical) span residues 14 to 34 (HTIS…MLLA), 42 to 62 (VALF…AITL), 130 to 150 (FMFS…LVGS), 156 to 176 (FSFD…VLFM), and 192 to 212 (IAIA…LIAL).

This sequence belongs to the AzlC family.

The protein localises to the cell membrane. This is an uncharacterized protein from Helicobacter pylori (strain J99 / ATCC 700824) (Campylobacter pylori J99).